A 518-amino-acid polypeptide reads, in one-letter code: Light-independent protochlorophyllide reductase subunit B (518 aa).

Asp36 serves as a coordination point for [4Fe-4S] cluster. Asp285 serves as the catalytic Proton donor. 420–421 (GL) lines the substrate pocket.

The protein belongs to the ChlB/BchB/BchZ family. Protochlorophyllide reductase is composed of three subunits; BchL, BchN and BchB. Forms a heterotetramer of two BchB and two BchN subunits. [4Fe-4S] cluster serves as cofactor.

It carries out the reaction chlorophyllide a + oxidized 2[4Fe-4S]-[ferredoxin] + 2 ADP + 2 phosphate = protochlorophyllide a + reduced 2[4Fe-4S]-[ferredoxin] + 2 ATP + 2 H2O. It participates in porphyrin-containing compound metabolism; bacteriochlorophyll biosynthesis (light-independent). Functionally, component of the dark-operative protochlorophyllide reductase (DPOR) that uses Mg-ATP and reduced ferredoxin to reduce ring D of protochlorophyllide (Pchlide) to form chlorophyllide a (Chlide). This reaction is light-independent. The NB-protein (BchN-BchB) is the catalytic component of the complex. The chain is Light-independent protochlorophyllide reductase subunit B from Bradyrhizobium sp. (strain ORS 278).